Reading from the N-terminus, the 797-residue chain is RAS guanyl-releasing protein 1 (797 aa).

The span at 1-12 shows a compositional bias: basic and acidic residues; it reads MGTLGKAREAPR. A disordered region spans residues 1–23; the sequence is MGTLGKAREAPRKPSHGCRAASK. The 124-residue stretch at 53 to 176 folds into the N-terminal Ras-GEF domain; it reads LGHLAKGASL…RLIDTTQINA (124 aa). A ras exchanger motif region; required for transforming activity region spans residues 57–110; it reads AKGASLDDLIDSCIQSFDADGNLCRSNQLLQVMLTMHRIVISSAELLQKVITLY. Thr184 carries the post-translational modification Phosphothreonine; by PKC. Residues 205-436 form the Ras-GEF domain; the sequence is EPEELSEHLT…YELSYAREPR (232 aa). EF-hand domains follow at residues 470–505 and 506–532; these read HVQR…FPFS and FCVM…ASSI. Positions 483, 485, 487, 489, and 494 each coordinate Ca(2+). A Phorbol-ester/DAG-type zinc finger spans residues 541–591; sequence PHNFQETTYLKPTFCDNCAGFLWGVIKQGYRCKDCGMNCHKQCKDLVVFEC. The segment at 673 to 694 is disordered; the sequence is TQTESQPWIGSEGPSGPFVLSS. The segment at 686–694 is suppress the PT region-mediated translocation to plasma membrane; sequence PSGPFVLSS. Positions 718–797 are PT region; mediates the BCR-dependent translocation to plasma membrane; it reads LVRKRAFVKW…LAQMEQGDCS (80 aa). Positions 746-786 form a coiled coil; that stretch reads PTYQELEQEINTLKADNDALKIQLKYAQKKIESLQLEKSNH.

This sequence belongs to the RASGRP family. As to quaternary structure, homodimer. Forms a signaling complex with DGKZ and HRAS. Interacts with F-actin. Interacts with SKAP1. In terms of tissue distribution, expressed in brain with higher expression in cerebellum, cerebral cortex and amygdala. Expressed in the hematopoietic system. Expressed in T-cells (at protein level). Expressed in NK cells (at protein level).

It localises to the cytoplasm. Its subcellular location is the cytosol. The protein localises to the cell membrane. It is found in the golgi apparatus membrane. The protein resides in the endoplasmic reticulum membrane. With respect to regulation, autoinhibited. Activated by diacylglycerol and calcium binding, which induces a conformational change releasing the autoinhibitory state. Regulated by DGKA. Regulated by DGKZ. Regulated by PLC gamma and F-actin polymerization. In terms of biological role, functions as a calcium- and diacylglycerol (DAG)-regulated nucleotide exchange factor specifically activating Ras through the exchange of bound GDP for GTP. Activates the Erk/MAP kinase cascade. Regulates T-cell/B-cell development, homeostasis and differentiation by coupling T-lymphocyte/B-lymphocyte antigen receptors to Ras. Regulates NK cell cytotoxicity and ITAM-dependent cytokine production by activation of Ras-mediated ERK and JNK pathways. Functions in mast cell degranulation and cytokine secretion, regulating FcERI-evoked allergic responses. May also function in differentiation of other cell types. The protein is RAS guanyl-releasing protein 1 (RASGRP1) of Homo sapiens (Human).